The sequence spans 141 residues: Hemoglobin subunit alpha-D (141 aa).

The Globin domain maps to 1 to 141; sequence MLTADDKKLI…VAAVLAEKYR (141 aa). Residues His-58 and His-87 each contribute to the heme b site.

It belongs to the globin family. In terms of assembly, heterotetramer of two alpha-D chains and two beta chains. In terms of tissue distribution, red blood cells.

Functionally, involved in oxygen transport from the lung to the various peripheral tissues. This chain is Hemoglobin subunit alpha-D (HBAD), found in Struthio camelus (Common ostrich).